Consider the following 235-residue polypeptide: Germin-like protein 1-4 (235 aa).

Positions 1–27 (MAAKLPTVVLLASFAAVILSLAAPLLA) are cleaved as a signal peptide. Cysteine 37 and cysteine 55 are joined by a disulfide. N-linked (GlcNAc...) asparagine glycosylation is present at asparagine 60. One can recognise a Cupin type-1 domain in the interval 69 to 226 (PGLGKPADVY…AFQVDGGVVE (158 aa)). Positions 120, 122, 127, and 171 each coordinate Mn(2+).

It belongs to the germin family. As to quaternary structure, oligomer (believed to be a pentamer but probably hexamer).

It localises to the secreted. The protein localises to the extracellular space. Its subcellular location is the apoplast. Functionally, may play a role in plant defense. Probably has no oxalate oxidase activity even if the active site is conserved. This Oryza sativa subsp. japonica (Rice) protein is Germin-like protein 1-4.